The following is a 236-amino-acid chain: Ribosomal RNA large subunit methyltransferase E (236 aa).

S-adenosyl-L-methionine contacts are provided by Gly76, Trp78, Asp99, Asp115, and Asp140. Lys180 acts as the Proton acceptor in catalysis.

This sequence belongs to the class I-like SAM-binding methyltransferase superfamily. RNA methyltransferase RlmE family.

It is found in the cytoplasm. The enzyme catalyses uridine(2552) in 23S rRNA + S-adenosyl-L-methionine = 2'-O-methyluridine(2552) in 23S rRNA + S-adenosyl-L-homocysteine + H(+). Functionally, specifically methylates the uridine in position 2552 of 23S rRNA at the 2'-O position of the ribose in the fully assembled 50S ribosomal subunit. This is Ribosomal RNA large subunit methyltransferase E from Rhodopseudomonas palustris (strain HaA2).